A 382-amino-acid polypeptide reads, in one-letter code: Sphingoid long-chain base transporter RSB1 (382 aa).

The Extracellular portion of the chain corresponds to Met1–Arg34. N-linked (GlcNAc...) asparagine glycosylation is found at Asn3 and Asn6. The chain crosses the membrane as a helical span at residues Phe35–Leu55. The Cytoplasmic segment spans residues Met56–Arg57. The helical transmembrane segment at Gln58–Gly78 threads the bilayer. Over Arg79–Asp90 the chain is Extracellular. Residues Ala91–Tyr111 form a helical membrane-spanning segment. Topologically, residues Tyr112–Ser135 are cytoplasmic. Residues Phe136–Cys156 form a helical membrane-spanning segment. Residues Gly157–His171 are Extracellular-facing. A helical membrane pass occupies residues Val172 to Phe192. The Cytoplasmic segment spans residues His193 to Arg241. The chain crosses the membrane as a helical span at residues Trp242–Cys262. Over Cys263 to Glu281 the chain is Extracellular. A helical membrane pass occupies residues Trp282–Phe302. Over His303–Leu382 the chain is Cytoplasmic.

It belongs to the lipid-translocating exporter (LTE) (TC 9.A.26.1) family.

It is found in the cell membrane. Its function is as follows. Catalyzes the ATP-dependent translocation of sphingoid long-chain bases (LCBs) from the cytoplasmic site toward the extracytoplasmic side of the membrane (flip-flop). Involved in the establishment of the functional lipid asymmetry of the plasma membrane. Regulates intracellular levels of LCBs, sphingolipid precursors that are growth inhibitory at increased levels. The chain is Sphingoid long-chain base transporter RSB1 (RSB1) from Saccharomyces cerevisiae (strain JAY291) (Baker's yeast).